A 336-amino-acid chain; its full sequence is Pyridoxal 5'-phosphate synthase subunit PdxS (336 aa).

A D-ribose 5-phosphate-binding site is contributed by Asp30. Lys87 serves as the catalytic Schiff-base intermediate with D-ribose 5-phosphate. Gly159 is a D-ribose 5-phosphate binding site. A D-glyceraldehyde 3-phosphate-binding site is contributed by Arg171. Residues Gly257 and 278–279 (GS) each bind D-ribose 5-phosphate.

The protein belongs to the PdxS/SNZ family. In terms of assembly, in the presence of PdxT, forms a dodecamer of heterodimers.

It carries out the reaction aldehydo-D-ribose 5-phosphate + D-glyceraldehyde 3-phosphate + L-glutamine = pyridoxal 5'-phosphate + L-glutamate + phosphate + 3 H2O + H(+). Its pathway is cofactor biosynthesis; pyridoxal 5'-phosphate biosynthesis. Catalyzes the formation of pyridoxal 5'-phosphate from ribose 5-phosphate (RBP), glyceraldehyde 3-phosphate (G3P) and ammonia. The ammonia is provided by the PdxT subunit. Can also use ribulose 5-phosphate and dihydroxyacetone phosphate as substrates, resulting from enzyme-catalyzed isomerization of RBP and G3P, respectively. This chain is Pyridoxal 5'-phosphate synthase subunit PdxS, found in Thermoplasma volcanium (strain ATCC 51530 / DSM 4299 / JCM 9571 / NBRC 15438 / GSS1).